Reading from the N-terminus, the 302-residue chain is Methionyl-tRNA formyltransferase (302 aa).

108–111 serves as a coordination point for (6S)-5,6,7,8-tetrahydrofolate; it reads SLLP.

It belongs to the Fmt family.

The enzyme catalyses L-methionyl-tRNA(fMet) + (6R)-10-formyltetrahydrofolate = N-formyl-L-methionyl-tRNA(fMet) + (6S)-5,6,7,8-tetrahydrofolate + H(+). In terms of biological role, attaches a formyl group to the free amino group of methionyl-tRNA(fMet). The formyl group appears to play a dual role in the initiator identity of N-formylmethionyl-tRNA by promoting its recognition by IF2 and preventing the misappropriation of this tRNA by the elongation apparatus. The protein is Methionyl-tRNA formyltransferase of Nitratiruptor sp. (strain SB155-2).